Reading from the N-terminus, the 214-residue chain is ATP-dependent Clp protease proteolytic subunit (214 aa).

The Nucleophile role is filled by serine 110. Histidine 135 is a catalytic residue.

It belongs to the peptidase S14 family. Fourteen ClpP subunits assemble into 2 heptameric rings which stack back to back to give a disk-like structure with a central cavity, resembling the structure of eukaryotic proteasomes.

Its subcellular location is the cytoplasm. The catalysed reaction is Hydrolysis of proteins to small peptides in the presence of ATP and magnesium. alpha-casein is the usual test substrate. In the absence of ATP, only oligopeptides shorter than five residues are hydrolyzed (such as succinyl-Leu-Tyr-|-NHMec, and Leu-Tyr-Leu-|-Tyr-Trp, in which cleavage of the -Tyr-|-Leu- and -Tyr-|-Trp bonds also occurs).. In terms of biological role, cleaves peptides in various proteins in a process that requires ATP hydrolysis. Has a chymotrypsin-like activity. Plays a major role in the degradation of misfolded proteins. The protein is ATP-dependent Clp protease proteolytic subunit of Legionella pneumophila (strain Corby).